Here is a 412-residue protein sequence, read N- to C-terminus: Ribosomal RNA large subunit methyltransferase G (412 aa).

A disordered region spans residues 386–412 (KAEPHENGESSSDTPNPQSSLYGGVKR). A compositionally biased stretch (polar residues) spans 394 to 406 (ESSSDTPNPQSSL).

This sequence belongs to the methyltransferase superfamily. RlmG family.

The protein resides in the cytoplasm. It catalyses the reaction guanosine(1835) in 23S rRNA + S-adenosyl-L-methionine = N(2)-methylguanosine(1835) in 23S rRNA + S-adenosyl-L-homocysteine + H(+). Its function is as follows. Specifically methylates the guanine in position 1835 (m2G1835) of 23S rRNA. In Shewanella sediminis (strain HAW-EB3), this protein is Ribosomal RNA large subunit methyltransferase G.